A 173-amino-acid chain; its full sequence is MINIDYIKSKIRDVPDFPKKGIVFKDITPLFLEPKIIEKIVDDFADFAKSLNIDAIIGAESRGFLFAAPLSIKLNKPFILVRKPNKLPNDVYSAEYTLEYGSSRVEMHKDALKPNQRVLIVDDLLATGGTVAAIENLVRQAKGIVAGSVYLIRLGFLKGEEKLSGKVHALINY.

It belongs to the purine/pyrimidine phosphoribosyltransferase family. Homodimer.

It localises to the cytoplasm. It catalyses the reaction AMP + diphosphate = 5-phospho-alpha-D-ribose 1-diphosphate + adenine. It functions in the pathway purine metabolism; AMP biosynthesis via salvage pathway; AMP from adenine: step 1/1. Catalyzes a salvage reaction resulting in the formation of AMP, that is energically less costly than de novo synthesis. The chain is Adenine phosphoribosyltransferase from Ureaplasma parvum serovar 3 (strain ATCC 27815 / 27 / NCTC 11736).